Consider the following 93-residue polypeptide: Large ribosomal subunit protein uL23cz/uL23cy (93 aa).

It belongs to the universal ribosomal protein uL23 family. Part of the 50S ribosomal subunit.

It localises to the plastid. It is found in the chloroplast. Functionally, binds to 23S rRNA. This Eucalyptus globulus subsp. globulus (Tasmanian blue gum) protein is Large ribosomal subunit protein uL23cz/uL23cy (rpl23-A).